Here is a 454-residue protein sequence, read N- to C-terminus: MPIIERILAREILDSRGNPTIQVEVTTDYGTTGVANVPSGASTGSREALELRDKGTKYENNWFGGKGVMTAVDNVNEIIALELEGLSVFNQREIDKIMIDLDGTATKSKLGANAILGVSLAVAKAAAAELEMPLYRYIGGANAHVLPLPMLNVLNGGEHASNTVDFQEFMIMPVGSKSLRQALQMANKVFHNLAKLLKKAGYGTQVGDEGGFAPNCKSHEEVLDYLVEAIKIAGYTPATKGKNAIAIALDAACSELYDEKTKKYTFKKLKQAISEKRPGFEHLGDVKLEYTSDELIEYFGKLIDKYPIISIEDGLAESDWEGFAKMTAKYGHKVQIVGDDLTVTNPKLLEKAIEQKSMNAILIKLNQIGTLSETMDAINKAQKANMACVVSHRSGETEDTTIADLAVAFNTGQIKTGSMSRTDRIAKYNRLLVIEEELGEQSEFEGIKAFYNIK.

A (2R)-2-phosphoglycerate-binding site is contributed by Gln167. Glu209 functions as the Proton donor in the catalytic mechanism. Residues Asp250, Glu312, and Asp339 each contribute to the Mg(2+) site. The (2R)-2-phosphoglycerate site is built by Lys364, Arg393, Ser394, and Lys415. The active-site Proton acceptor is Lys364.

The protein belongs to the enolase family. Mg(2+) is required as a cofactor.

It is found in the cytoplasm. The protein localises to the secreted. Its subcellular location is the cell surface. It catalyses the reaction (2R)-2-phosphoglycerate = phosphoenolpyruvate + H2O. It functions in the pathway carbohydrate degradation; glycolysis; pyruvate from D-glyceraldehyde 3-phosphate: step 4/5. In terms of biological role, catalyzes the reversible conversion of 2-phosphoglycerate (2-PG) into phosphoenolpyruvate (PEP). It is essential for the degradation of carbohydrates via glycolysis. The polypeptide is Enolase (Mycoplasmopsis agalactiae (strain NCTC 10123 / CIP 59.7 / PG2) (Mycoplasma agalactiae)).